A 567-amino-acid polypeptide reads, in one-letter code: MATGFKLPELAPVKSAWGPPETEQIGGDIPYAPFSKGDRLGKIADWSVDQPKDGREQRGRQGAFAGRFRDQYQTYGYGASSIFGYQHSEDESSFSVIDRGSVNRTRTSARNGGTLLKVRGRGQNVQRGGRGGRYGSSGGRGAGDTVVSRSSGAGGARGRRFGWKDYDKHQRLRNASVTVGDDWQLLDEVEFSHLSKLNLAAAAPVTVDSYGYIYPYDKSFDKIHVKSEKPLQALDRVHYNPTTTEDPVIQKLALNSDANIFITDSILSLLMCSTRSVYPWDIVITHQSGKLFFDKREGGPFDYLTVNENAYDSPMDADNREGVNSPGALSVEATYINQNFCVQALRETEEEKYKLPHPNPFYNSKEQSEPLAAHGYIYRDVDLSLETDEKPVKLMVRTEVDGYVKNPANDVQYISIKALNEYDPKFTNVTGSVDWRSKLESQRGAVFATEMKNNSCKLARWTVEALLAGVDSMKVGFVSRSNARDAQHHGILGVVAYKPADLASQMNLSLSNGWGIVRTIADVCLKMPDGKYVLVKDPNRPILRLYSVPPNTFEEAAGPSLEASSTA.

Disordered stretches follow at residues 12–34 and 122–160; these read PVKS…YAPF and GQNV…RGRR. Positions 128-142 are enriched in gly residues; that stretch reads GGRGGRYGSSGGRGA. Positions 300 to 314 are RNA gate; it reads PFDYLTVNENAYDSP.

This sequence belongs to the eIF-3 subunit D family. Component of the eukaryotic translation initiation factor 3 (eIF-3) complex. The eIF-3 complex appears to include tif32/eif3a, SPAC25G10.08/eif3b, tif33/eif3c, SPBC4C3.07/eif3f, tif35/eif3g and sum1/eif3i. This set of common subunits may also associate exclusively with either moe1/eif3d and int6/eif3e, or with SPAC821.05/eif3h and SPAC1751.03/eif3m. The eIF-3 complex may also include SPAC3A12.13c/eif3j.

It is found in the cytoplasm. MRNA cap-binding component of the eukaryotic translation initiation factor 3 (eIF-3) complex, which is involved in protein synthesis of a specialized repertoire of mRNAs and, together with other initiation factors, stimulates binding of mRNA and methionyl-tRNAi to the 40S ribosome. The eIF-3 complex specifically targets and initiates translation of a subset of mRNAs involved in cell proliferation. In the eIF-3 complex, eif3d specifically recognizes and binds the 7-methylguanosine cap of a subset of mRNAs. This is Eukaryotic translation initiation factor 3 subunit D (moe1) from Schizosaccharomyces pombe (strain 972 / ATCC 24843) (Fission yeast).